A 48-amino-acid polypeptide reads, in one-letter code: uncharacterized protein (48 aa).

The helical transmembrane segment at 20-37 (ILASPLFFANYVLHAAIH) threads the bilayer.

The protein resides in the membrane. This is an uncharacterized protein from Saccharomyces cerevisiae (strain ATCC 204508 / S288c) (Baker's yeast).